A 352-amino-acid chain; its full sequence is E3 ubiquitin-protein ligase RNF146 (352 aa).

Residues 36–74 (CAICLQTCVHPVSLPCKHVFCYLCVKGASWLGKRCALCR) form an RING-type zinc finger. Glycyl lysine isopeptide (Lys-Gly) (interchain with G-Cter in ubiquitin) cross-links involve residues Lys84 and Lys94. One can recognise a WWE domain in the interval 91–167 (EELKAASRGN…EHGRRRKIKR (77 aa)). Residues Tyr107, Arg110, and Trp114 each contribute to the a glycoprotein site. Lys130 participates in a covalent cross-link: Glycyl lysine isopeptide (Lys-Gly) (interchain with G-Cter in ubiquitin). A glycoprotein contacts are provided by Tyr144, Gln153, Arg163, and Lys175. A Glycyl lysine isopeptide (Lys-Gly) (interchain with G-Cter in ubiquitin) cross-link involves residue Lys175. Disordered stretches follow at residues 195–242 (SSAD…AGAS), 259–293 (ERSH…ASSD), and 317–352 (NQTV…VTEV). Over residues 197 to 210 (ADGADSGSAHTGAS) the composition is skewed to low complexity. Residues 215–233 (VPSSTRPLTSVDGQLTSPV) are compositionally biased toward polar residues. Over residues 282-293 (STEETESDASSD) the composition is skewed to acidic residues. Ser288 and Ser292 each carry phosphoserine.

Can form homooligomers. Interacts with PARsylated AXIN1, AXIN2, BLZF1, CASC3, H1-2, IPO7, LIG3, NCL, PARP1, XRCC1, XRCC5 and XRCC6. Interacts with DDB1, DHX15, IQGAP1, LRPPRC, PARP2, PRKDC, RUVBL2, TNKS1 and TNKS2. Binding often leads to interactor ubiquitination, in the presence of the appropriate E1 and E2 enzymes, and proteasomal degradation. Ubiquitinated; autoubiquitinated. Autoubiquitination is enhanced upon poly(ADP-ribose)-binding.

The protein localises to the cytoplasm. The protein resides in the cytosol. It localises to the nucleus. It carries out the reaction S-ubiquitinyl-[E2 ubiquitin-conjugating enzyme]-L-cysteine + [acceptor protein]-L-lysine = [E2 ubiquitin-conjugating enzyme]-L-cysteine + N(6)-ubiquitinyl-[acceptor protein]-L-lysine.. Its pathway is protein modification; protein ubiquitination. E3 ubiquitin-protein ligase that specifically binds poly-ADP-ribosylated (PARsylated) proteins and mediates their ubiquitination and subsequent degradation. May regulate many important biological processes, such as cell survival and DNA damage response. Acts as an activator of the Wnt signaling pathway by mediating the ubiquitination of PARsylated AXIN1 and AXIN2, 2 key components of the beta-catenin destruction complex. Acts in cooperation with tankyrase proteins (TNKS and TNKS2), which mediate PARsylation of target proteins AXIN1, AXIN2, BLZF1, CASC3, TNKS and TNKS2. Recognizes and binds tankyrase-dependent PARsylated proteins via its WWE domain and mediates their ubiquitination, leading to their degradation. Different ubiquitin linkage types have been observed: TNKS2 undergoes ubiquitination at 'Lys-48' and 'Lys-63', while AXIN1 is only ubiquitinated at 'Lys-48'. May regulate TNKS and TNKS2 subcellular location, preventing aggregation at a centrosomal location. Neuroprotective protein. Protects the brain against N-methyl-D-aspartate (NMDA) receptor-mediated glutamate excitotoxicity and ischemia, by interfering with PAR-induced cell death, called parthanatos. Prevents nuclear translocation of AIFM1 in a PAR-binding dependent manner. Does not affect PARP1 activation. Protects against cell death induced by DNA damaging agents, such as N-methyl-N-nitro-N-nitrosoguanidine (MNNG) and rescues cells from G1 arrest. Promotes cell survival after gamma-irradiation. Facilitates DNA repair. In Rattus norvegicus (Rat), this protein is E3 ubiquitin-protein ligase RNF146 (Rnf146).